Here is a 188-residue protein sequence, read N- to C-terminus: V-type proton ATPase subunit E (188 aa).

The protein belongs to the V-ATPase E subunit family.

Its function is as follows. Produces ATP from ADP in the presence of a proton gradient across the membrane. This chain is V-type proton ATPase subunit E, found in Dictyoglomus turgidum (strain DSM 6724 / Z-1310).